Consider the following 361-residue polypeptide: Chorismate synthase (361 aa).

Arginine 48 and arginine 54 together coordinate NADP(+). FMN is bound by residues 131-133 (RSS), 243-244 (NA), glycine 287, 302-306 (KPTSS), and arginine 328.

Belongs to the chorismate synthase family. As to quaternary structure, homotetramer. The cofactor is FMNH2.

The enzyme catalyses 5-O-(1-carboxyvinyl)-3-phosphoshikimate = chorismate + phosphate. It functions in the pathway metabolic intermediate biosynthesis; chorismate biosynthesis; chorismate from D-erythrose 4-phosphate and phosphoenolpyruvate: step 7/7. In terms of biological role, catalyzes the anti-1,4-elimination of the C-3 phosphate and the C-6 proR hydrogen from 5-enolpyruvylshikimate-3-phosphate (EPSP) to yield chorismate, which is the branch point compound that serves as the starting substrate for the three terminal pathways of aromatic amino acid biosynthesis. This reaction introduces a second double bond into the aromatic ring system. This is Chorismate synthase from Bradyrhizobium sp. (strain BTAi1 / ATCC BAA-1182).